A 99-amino-acid chain; its full sequence is Large ribosomal subunit protein bL27 (99 aa).

The segment at 1–21 (MAHKKGGGSTRNGRDSRAKRL) is disordered.

Belongs to the bacterial ribosomal protein bL27 family.

The chain is Large ribosomal subunit protein bL27 from Thermomicrobium roseum (strain ATCC 27502 / DSM 5159 / P-2).